An 86-amino-acid chain; its full sequence is Protein Vpu (86 aa).

Residues 1 to 12 (MVDLLAKVDYRI) lie on the Extracellular side of the membrane. The helical transmembrane segment at 13–33 (VIVAFIVALIIAIVVWTIAYI) threads the bilayer. Residues 34–86 (EYRKLLRQRRIDRLIKRTRERAEDSGNESDGDTEELSTMVDMGNLRLLDVNDL) lie on the Cytoplasmic side of the membrane. Residues 52 to 71 (RERAEDSGNESDGDTEELST) form a disordered region. Phosphoserine; by host CK2 is present on residues Ser-58 and Ser-62. Positions 58–68 (SGNESDGDTEE) are enriched in acidic residues.

Belongs to the HIV-1 VPU protein family. Homopentamer. Interacts with host CD4 and BRTC; these interactions induce proteasomal degradation of CD4. Interacts with host BST2; this interaction leads to the degradation of host BST2. Interacts with host FBXW11. Interacts with host AP1M1; this interaction plays a role in the mistrafficking and subsequent degradation of host BST2. Interacts with host RANBP2; this interaction allows Vpu to down-regulate host BLM sumoylation. Phosphorylated by host CK2. This phosphorylation is necessary for interaction with human BTRC and degradation of CD4.

The protein resides in the host membrane. Ion channel activity is inhibited by hexamethylene amiloride in vitro. Enhances virion budding by targeting host CD4 and Tetherin/BST2 to proteasome degradation. Degradation of CD4 prevents any unwanted premature interactions between viral Env and its host receptor CD4 in the endoplasmic reticulum. Degradation of antiretroviral protein Tetherin/BST2 is important for virion budding, as BST2 tethers new viral particles to the host cell membrane. Mechanistically, Vpu bridges either CD4 or BST2 to BTRC, a substrate recognition subunit of the Skp1/Cullin/F-box protein E3 ubiquitin ligase, induces their ubiquitination and subsequent proteasomal degradation. The alteration of the E3 ligase specificity by Vpu seems to promote the degradation of host IKBKB, leading to NF-kappa-B down-regulation and subsequent apoptosis. Acts as a viroporin that forms an oligomeric ion channel in membranes. Modulates the host DNA repair mechanisms to promote degradation of nuclear viral cDNA in cells that are already productively infected in order to suppress immune sensing and proviral hyper-integration (superinfection). Manipulates PML-NBs and modulates SUMOylation of host BLM protein thereby enhancing its DNA-end processing activity toward viral unintegrated linear DNA. Also inhibits RAD52-mediated homologous repair of viral cDNA, preventing the generation of dead-end circular forms of single copies of the long terminal repeat and permitting sustained nucleolytic attack. The sequence is that of Protein Vpu from Homo sapiens (Human).